The following is a 356-amino-acid chain: Tyrosine recombinase XerS (356 aa).

The Core-binding (CB) domain maps to 16-121 (IMPSYVLEYY…ALSSLYKYLT (106 aa)). Residues 169-354 (GFLDYIDNEY…INEEQKNALD (186 aa)) form the Tyr recombinase domain. Catalysis depends on residues Arg-210, Lys-234, His-306, Arg-309, and His-332. Tyr-341 acts as the O-(3'-phospho-DNA)-tyrosine intermediate in catalysis.

This sequence belongs to the 'phage' integrase family. XerS subfamily.

Its subcellular location is the cytoplasm. Its activity is regulated as follows. FtsK is required for recombination. In terms of biological role, site-specific tyrosine recombinase, which acts by catalyzing the cutting and rejoining of the recombining DNA molecules. Essential to convert dimers of the bacterial chromosome into monomers to permit their segregation at cell division. The sequence is that of Tyrosine recombinase XerS from Lactococcus lactis subsp. lactis (strain IL1403) (Streptococcus lactis).